A 1102-amino-acid polypeptide reads, in one-letter code: Centrosomal protein of 128 kDa (1102 aa).

Residues S31, S248, and S290 each carry the phosphoserine modification. Coiled-coil stretches lie at residues 215-822 and 878-959; these read VSDR…LETE and EELK…ALQM. The segment at 326–346 is disordered; sequence QHQVPCISKQPLSHQDDQGDD. Disordered stretches follow at residues 991-1048 and 1070-1102; these read SEKT…DHSR and DPAS…KYKK. Residues 1009 to 1027 are compositionally biased toward basic and acidic residues; the sequence is QQRRDDTKPRIKSFRDDRP. Composition is skewed to polar residues over residues 1039 to 1048 and 1076 to 1089; these read HSSSCQDHSR and GDTT…TSPQ. A compositionally biased stretch (basic and acidic residues) spans 1090 to 1102; sequence SKKEEHEIKKYKK.

It localises to the cytoplasm. The protein resides in the cytoskeleton. It is found in the microtubule organizing center. Its subcellular location is the centrosome. The protein localises to the centriole. It localises to the spindle pole. The polypeptide is Centrosomal protein of 128 kDa (Cep128) (Mus musculus (Mouse)).